Consider the following 298-residue polypeptide: Probable phosphite transport system-binding protein HtxB (298 aa).

The first 33 residues, 1–33 (MQVFTLFSKFKKALTRAILAFIATIIVCTPAQA), serve as a signal peptide directing secretion.

Belongs to the phosphate/phosphite/phosphonate binding protein family.

Its function is as follows. Probably forms part of a binding-protein-dependent hypophosphite transporter. The polypeptide is Probable phosphite transport system-binding protein HtxB (htxB) (Stutzerimonas stutzeri (Pseudomonas stutzeri)).